Here is a 420-residue protein sequence, read N- to C-terminus: Cytochrome c biogenesis protein Ccs1 (420 aa).

The next 3 membrane-spanning stretches (helical) occupy residues 12–32, 71–91, and 157–177; these read LRFS…GTVI, TWWF…CTFL, and IAPI…IVGS.

The protein belongs to the Ccs1/CcsB family. In terms of assembly, may interact with CcsA.

The protein localises to the plastid. Its subcellular location is the chloroplast thylakoid membrane. Its function is as follows. Required during biogenesis of c-type cytochromes (cytochrome c6 and cytochrome f) at the step of heme attachment. In Phaeodactylum tricornutum (strain CCAP 1055/1), this protein is Cytochrome c biogenesis protein Ccs1.